Consider the following 243-residue polypeptide: UMP-CMP kinase 1 (243 aa).

29 to 34 (GSGKGT) contacts ATP. The NMP stretch occupies residues 49–78 (SAGDLLREEAKYDTEQGTMIKNLMNEGKLV). A ribonucleoside 5'-phosphate is bound by residues R55, 76–78 (KLV), and 103–106 (GFPR). Position 110 (N110) interacts with CMP. The segment at 141 to 149 (NRNQGRDDD) is LID. R142 is a binding site for ATP. Positions 146 and 157 each coordinate a ribonucleoside 5'-phosphate. Residue R185 coordinates ATP.

It belongs to the adenylate kinase family. UMP-CMP kinase subfamily. In terms of assembly, monomer. Requires Mg(2+) as cofactor.

Its subcellular location is the cytoplasm. The protein resides in the nucleus. It catalyses the reaction UMP + ATP = UDP + ADP. The enzyme catalyses CMP + ATP = CDP + ADP. It carries out the reaction dCMP + ATP = dCDP + ADP. Functionally, catalyzes the phosphorylation of pyrimidine nucleoside monophosphates at the expense of ATP. Plays an important role in de novo pyrimidine nucleotide biosynthesis. Has preference for UMP and CMP as phosphate acceptors. This is UMP-CMP kinase 1 from Oryza sativa subsp. japonica (Rice).